The sequence spans 434 residues: Citrate synthase (434 aa).

Active-site residues include His310 and Asp368.

Belongs to the citrate synthase family.

It catalyses the reaction oxaloacetate + acetyl-CoA + H2O = citrate + CoA + H(+). It functions in the pathway carbohydrate metabolism; tricarboxylic acid cycle; isocitrate from oxaloacetate: step 1/2. This Bradyrhizobium diazoefficiens (strain JCM 10833 / BCRC 13528 / IAM 13628 / NBRC 14792 / USDA 110) protein is Citrate synthase (gltA).